The sequence spans 315 residues: Deoxyhypusine hydroxylase (315 aa).

HEAT-like PBS-type repeat units lie at residues 23-52 (IAKR…LNDK), 56-82 (LRHE…LVKN), 89-115 (VRHE…YSND), 179-205 (NRYR…GLKD), 211-237 (LRHE…CVLD), and 244-270 (VRHE…LLQD). The Fe cation site is built by H58, H91, and E92. 3 residues coordinate Fe cation: H213, H246, and E247.

Belongs to the deoxyhypusine hydroxylase family. It depends on Fe(2+) as a cofactor.

The catalysed reaction is [eIF5A protein]-deoxyhypusine + AH2 + O2 = [eIF5A protein]-hypusine + A + H2O. It functions in the pathway protein modification; eIF5A hypusination. In terms of biological role, catalyzes the hydroxylation of the N(6)-(4-aminobutyl)-L-lysine intermediate produced by deoxyhypusine synthase/DHPS on a critical lysine of the eukaryotic translation initiation factor 5A/eIF-5A. This is the second step of the post-translational modification of that lysine into an unusual amino acid residue named hypusine. Hypusination is unique to mature eIF-5A factor and is essential for its function. This is Deoxyhypusine hydroxylase (dohh-1) from Dictyostelium discoideum (Social amoeba).